The sequence spans 238 residues: Probable transcriptional regulatory protein SZO_02930 (238 aa).

Belongs to the TACO1 family. YeeN subfamily.

The protein localises to the cytoplasm. The protein is Probable transcriptional regulatory protein SZO_02930 of Streptococcus equi subsp. zooepidemicus (strain H70).